The chain runs to 375 residues: Alanine racemase (375 aa).

K45 acts as the Proton acceptor; specific for D-alanine in catalysis. An N6-(pyridoxal phosphate)lysine modification is found at K45. R141 lines the substrate pocket. The active-site Proton acceptor; specific for L-alanine is Y270. M318 contacts substrate.

Belongs to the alanine racemase family. Requires pyridoxal 5'-phosphate as cofactor.

It carries out the reaction L-alanine = D-alanine. Its pathway is amino-acid biosynthesis; D-alanine biosynthesis; D-alanine from L-alanine: step 1/1. Its function is as follows. Catalyzes the interconversion of L-alanine and D-alanine. May also act on other amino acids. This Pseudoalteromonas atlantica (strain T6c / ATCC BAA-1087) protein is Alanine racemase (alr).